Reading from the N-terminus, the 345-residue chain is Serpentine receptor class beta-13 (345 aa).

The Extracellular segment spans residues 1 to 22 (MAGINQTKCDLGFQITFNTVYR). An N-linked (GlcNAc...) asparagine glycan is attached at asparagine 5. A helical transmembrane segment spans residues 23-43 (FSQFYTFSVSSFAVPGLIYFM). At 44–58 (FKRLFQLYFHGNLKT) the chain is on the cytoplasmic side. Residues 59 to 79 (LLIAYFISILLYAVMLCFAFG) form a helical membrane-spanning segment. Topologically, residues 80-103 (YQFFVPFFIKSNCDLIINKTLFKY) are extracellular. An N-linked (GlcNAc...) asparagine glycan is attached at asparagine 97. The chain crosses the membrane as a helical span at residues 104 to 124 (IHTSVIFLLTTPMMFPLGFSI). Over 125 to 142 (ERFTAMAMASRYENIRTL) the chain is Cytoplasmic. Residues 143 to 163 (IGPVLVIFLIIPNCIIFYFLF) form a helical membrane-spanning segment. Topologically, residues 164–189 (QHETYDDTFISFLMLPNTTAVNFNTY) are extracellular. Asparagine 180 carries N-linked (GlcNAc...) asparagine glycosylation. Residues 190–210 (LWFLLYLNIGNLALNVLLLLV) traverse the membrane as a helical segment. At 211–241 (HRKFKRRLLLHKTSLSTRYAIEEISQSSKFT) the chain is on the cytoplasmic side. Residues 242 to 262 (LIITFTHLLFFGCNTICSILV) form a helical membrane-spanning segment. Topologically, residues 263-280 (RVLGEPFFGSFINHSVAR) are extracellular. N-linked (GlcNAc...) asparagine glycosylation occurs at asparagine 275. Residues 281–301 (GVNCAVPTYNLVIVVVGFVSL) traverse the membrane as a helical segment. The Cytoplasmic segment spans residues 302–345 (SKLNSRRQQEVQTTVQLKTTGKEGARNYDNITANQWATITQIGF).

Belongs to the nematode receptor-like protein srb family. In terms of tissue distribution, expressed in the head sensory neurons ASI, ASK and AWB. Not expressed in male somatic gonads or sperm.

It localises to the cell membrane. Its subcellular location is the perikaryon. It is found in the cell projection. The protein localises to the dendrite. In terms of biological role, G-protein coupled receptor that antagonizes the negative effects of the gcy-35 oxygen sensor on spermatogenesis. This leads to the maintenance of mitochondrial function in developing spermatocytes and/or spermatids prior to testis maturation during the early larval stages. Regulates the navigational capacity of sperm during hyperoxic conditions ensuring the proper targeting of sperm derived from males to the fertilization site in the uterus of hermaphrodites. May act in the same signaling pathway as the neuropeptide flp-21. The protein is Serpentine receptor class beta-13 of Caenorhabditis elegans.